Here is a 237-residue protein sequence, read N- to C-terminus: Ribonuclease PH (237 aa).

Residues Arg86 and 124–126 (GTR) each bind phosphate.

Belongs to the RNase PH family. As to quaternary structure, homohexameric ring arranged as a trimer of dimers.

The catalysed reaction is tRNA(n+1) + phosphate = tRNA(n) + a ribonucleoside 5'-diphosphate. Its function is as follows. Phosphorolytic 3'-5' exoribonuclease that plays an important role in tRNA 3'-end maturation. Removes nucleotide residues following the 3'-CCA terminus of tRNAs; can also add nucleotides to the ends of RNA molecules by using nucleoside diphosphates as substrates, but this may not be physiologically important. Probably plays a role in initiation of 16S rRNA degradation (leading to ribosome degradation) during starvation. The sequence is that of Ribonuclease PH from Methylorubrum populi (strain ATCC BAA-705 / NCIMB 13946 / BJ001) (Methylobacterium populi).